Consider the following 566-residue polypeptide: Macrophage colony-stimulating factor 1 (566 aa).

Positions 1–32 (MTARGAAGRCPSSTWMGSRLLLVCLLVSRSVA) are cleaved as a signal peptide. Over 33–508 (EVSEHCSHMI…SSIQDPQTSA (476 aa)) the chain is Extracellular. N-linked (GlcNAc...) asparagine glycans are attached at residues N106, N153, and N171. 2 disordered regions span residues 197 to 417 (PSSD…KLLP) and 434 to 484 (GKKS…GAAR). Residues 253–265 (PRSTCQTLESTEQ) are compositionally biased toward polar residues. S302 carries O-linked (Xyl...) (chondroitin sulfate) serine glycosylation. Over residues 348–360 (DQQPTNITDTPLT) the composition is skewed to polar residues. Residue N353 is glycosylated (N-linked (GlcNAc...) asparagine). O-linked (GalNAc...) threonine glycans are attached at residues T355 and T357. The segment covering 377-394 (EKTDGSSTLREDQQEPRS) has biased composition (basic and acidic residues). Residues 400–410 (LNPQRVGNSAT) show a composition bias toward polar residues. The segment covering 434 to 445 (GKKSTRDRRSPA) has biased composition (basic and acidic residues). The helical transmembrane segment at 509 to 531 (FVFWVLGIILVLLAVGGLLFYSW) threads the bilayer. At 532–566 (KRRSHRDPRTLDSSVGRPEGSSLAQDEDRQVELPV) the chain is on the cytoplasmic side. Residues 538-566 (DPRTLDSSVGRPEGSSLAQDEDRQVELPV) form a disordered region. Positions 557–566 (DEDRQVELPV) are enriched in basic and acidic residues.

In terms of assembly, homodimer or heterodimer; disulfide-linked. Likely to exist in multiple forms: homodimer consisting of 2 identical 150-200 kDa proteoglycan subunits, heterodimer consisting of a 150-200 kDa proteoglycan subunit and a truncated 43 kDa subunit, and a homodimer consisting of 2 identical 43 kDa subunits. Interacts with CSF1R. N-glycosylated. In terms of processing, O-glycosylated; contains chondroitin sulfate.

It localises to the cell membrane. The protein resides in the secreted. Its subcellular location is the extracellular space. Functionally, cytokine that plays an essential role in the regulation of survival, proliferation and differentiation of hematopoietic precursor cells, especially mononuclear phagocytes, such as macrophages and monocytes. Promotes the release of pro-inflammatory chemokines, and thereby plays an important role in innate immunity and in inflammatory processes. Plays an important role in the regulation of osteoclast proliferation and differentiation, the regulation of bone resorption, and is required for normal bone development. Required for normal male and female fertility. Promotes reorganization of the actin cytoskeleton, regulates formation of membrane ruffles, cell adhesion and cell migration. Plays a role in lipoprotein clearance. This chain is Macrophage colony-stimulating factor 1 (Csf1), found in Rattus norvegicus (Rat).